The chain runs to 350 residues: Serine/arginine-rich splicing factor RS40 (350 aa).

RRM domains lie at 2–74 and 97–168; these read KPVF…WTKS and KTLF…YAVK. 2 stretches are compositionally biased toward basic and acidic residues: residues 73–82 and 167–187; these read KSERGGDKRS and VKDD…DRSP. Disordered stretches follow at residues 73 to 94 and 167 to 350; these read KSER…SSMR and VKDD…PADE. A phosphoserine mark is found at Ser-193, Ser-195, and Ser-211. Basic and acidic residues-rich tracts occupy residues 216-227 and 240-255; these read YRKERTSPDYGR and GSPE…DSPR. Phosphoserine is present on residues Ser-241, Ser-262, Ser-278, Ser-298, Ser-308, Ser-335, and Ser-340. Positions 272–289 are enriched in basic and acidic residues; it reads NKRERMSPNHSPFKKESP. A compositionally biased stretch (basic and acidic residues) spans 299–308; sequence PIERRERSRS.

Belongs to the splicing factor SR family. RS subfamily. As to quaternary structure, component of the spliceosome. Interacts with SNRNP35. Interacts with CYP59. Interacts with RCF3 and CPL1. Interacts with DRB1/HYL1 and SE. Highly expressed in roots and flowers. A presumably longer alternatively spliced form is found in leaves, stems and flowers.

It is found in the nucleus. The protein resides in the nucleus speckle. In terms of biological role, required for constitutive and alternative pre-mRNA splicing. Involved in primary miRNA processing and pri-miRNA biogenesis. Binds both intronless and intron-containing pri-miRNAs. The chain is Serine/arginine-rich splicing factor RS40 (RS40) from Arabidopsis thaliana (Mouse-ear cress).